Reading from the N-terminus, the 356-residue chain is Probable neutral protease 2 homolog TRV_06370 (356 aa).

The signal sequence occupies residues 1–17 (MQFTALLAALGAPLALA). A propeptide spanning residues 18–183 (ASIPAAAHNH…DDSTGVIDKR (166 aa)) is cleaved from the precursor. Intrachain disulfides connect Cys-191–Cys-262 and Cys-269–Cys-287. His-311 is a binding site for Zn(2+). Glu-312 is an active-site residue. Positions 315 and 326 each coordinate Zn(2+).

Belongs to the peptidase M35 family. The cofactor is Zn(2+).

The protein localises to the secreted. It carries out the reaction Preferential cleavage of bonds with hydrophobic residues in P1'. Also 3-Asn-|-Gln-4 and 8-Gly-|-Ser-9 bonds in insulin B chain.. Probable secreted metalloprotease that shows high activities on basic nuclear substrates such as histone and protamine. May be involved in virulence. The protein is Probable neutral protease 2 homolog TRV_06370 of Trichophyton verrucosum (strain HKI 0517).